We begin with the raw amino-acid sequence, 369 residues long: Succinyl-diaminopimelate desuccinylase (369 aa).

His77 lines the Zn(2+) pocket. Asp79 is a catalytic residue. Position 103 (Asp103) interacts with Zn(2+). Residue Glu136 is the Proton acceptor of the active site. Glu137, Glu165, and His345 together coordinate Zn(2+).

It belongs to the peptidase M20A family. Zn(2+) is required as a cofactor. Requires Co(2+) as cofactor.

It catalyses the reaction N-succinyl-(2S,6S)-2,6-diaminopimelate + H2O = (2S,6S)-2,6-diaminopimelate + succinate. The protein operates within amino-acid biosynthesis; L-lysine biosynthesis via DAP pathway; LL-2,6-diaminopimelate from (S)-tetrahydrodipicolinate (succinylase route): step 3/3. This is Succinyl-diaminopimelate desuccinylase (dapE) from Corynebacterium glutamicum (strain ATCC 13032 / DSM 20300 / JCM 1318 / BCRC 11384 / CCUG 27702 / LMG 3730 / NBRC 12168 / NCIMB 10025 / NRRL B-2784 / 534).